The primary structure comprises 280 residues: Energy-coupling factor transporter ATP-binding protein EcfA2 (280 aa).

The ABC transporter domain occupies Ile3–Gly245. Gly40–Ser47 is a binding site for ATP.

It belongs to the ABC transporter superfamily. Energy-coupling factor EcfA family. In terms of assembly, forms a stable energy-coupling factor (ECF) transporter complex composed of 2 membrane-embedded substrate-binding proteins (S component), 2 ATP-binding proteins (A component) and 2 transmembrane proteins (T component).

It localises to the cell membrane. Its function is as follows. ATP-binding (A) component of a common energy-coupling factor (ECF) ABC-transporter complex. Unlike classic ABC transporters this ECF transporter provides the energy necessary to transport a number of different substrates. This is Energy-coupling factor transporter ATP-binding protein EcfA2 from Streptococcus agalactiae serotype Ia (strain ATCC 27591 / A909 / CDC SS700).